We begin with the raw amino-acid sequence, 404 residues long: Cysteine desulfurase IscS (404 aa).

Pyridoxal 5'-phosphate-binding positions include 75–76, Asn155, Gln183, and 203–205; these read AT and SAH. Lys206 is subject to N6-(pyridoxal phosphate)lysine. Thr243 is a binding site for pyridoxal 5'-phosphate. Cys328 functions as the Cysteine persulfide intermediate in the catalytic mechanism. Residue Cys328 coordinates [2Fe-2S] cluster.

Belongs to the class-V pyridoxal-phosphate-dependent aminotransferase family. NifS/IscS subfamily. In terms of assembly, homodimer. Forms a heterotetramer with IscU, interacts with other sulfur acceptors. Pyridoxal 5'-phosphate serves as cofactor.

It is found in the cytoplasm. It catalyses the reaction (sulfur carrier)-H + L-cysteine = (sulfur carrier)-SH + L-alanine. It participates in cofactor biosynthesis; iron-sulfur cluster biosynthesis. In terms of biological role, master enzyme that delivers sulfur to a number of partners involved in Fe-S cluster assembly, tRNA modification or cofactor biosynthesis. Catalyzes the removal of elemental sulfur atoms from cysteine to produce alanine. Functions as a sulfur delivery protein for Fe-S cluster synthesis onto IscU, an Fe-S scaffold assembly protein, as well as other S acceptor proteins. This is Cysteine desulfurase IscS from Aeromonas salmonicida (strain A449).